Here is a 380-residue protein sequence, read N- to C-terminus: Putative S-(hydroxymethyl)glutathione dehydrogenase 2 (380 aa).

Cys50 is a Zn(2+) binding site. NAD(+) is bound at residue His51. Residues His72, Glu73, Cys102, Cys105, Cys108, Cys116, and Cys179 each contribute to the Zn(2+) site. Residues 204-209, Asp228, and 297-299 contribute to the NAD(+) site; these read GLGSVG and IGV.

It belongs to the zinc-containing alcohol dehydrogenase family. Class-III subfamily. The cofactor is Zn(2+).

The enzyme catalyses a primary alcohol + NAD(+) = an aldehyde + NADH + H(+). It catalyses the reaction a secondary alcohol + NAD(+) = a ketone + NADH + H(+). It carries out the reaction S-(hydroxymethyl)glutathione + NADP(+) = S-formylglutathione + NADPH + H(+). The catalysed reaction is S-(hydroxymethyl)glutathione + NAD(+) = S-formylglutathione + NADH + H(+). The enzyme catalyses S-nitrosoglutathione + NADH + H(+) = S-(hydroxysulfenamide)glutathione + NAD(+). Oxidizes long-chain alcohols and, in the presence of glutathione, is able to oxidize formaldehyde. Also acts as a S-nitroso-glutathione reductase by catalyzing the NADH-dependent reduction of S-nitrosoglutathione, thereby regulating protein S-nitrosylation. The polypeptide is Putative S-(hydroxymethyl)glutathione dehydrogenase 2 (Schizosaccharomyces pombe (strain 972 / ATCC 24843) (Fission yeast)).